The chain runs to 874 residues: Oxidation resistance protein 1 (874 aa).

The segment at 1–89 is disordered; sequence MTKDKNSPGL…KTLDKKDGRR (89 aa). Positions 64–89 are enriched in basic and acidic residues; sequence RRSELKRFYTIDTGQKKTLDKKDGRR. At Ser91 the chain carries Phosphoserine. The LysM domain occupies 99–142; that stretch reads IEYTVESRDSLNSIALKFDTTPNELVQLNKLFSRAVVTGQVLYV. Residue Thr119 is modified to Phosphothreonine. Over residues 151 to 169 the composition is skewed to low complexity; the sequence is VESSPSLSPVSPLSPTSSE. The disordered stretch occupies residues 151–194; that stretch reads VESSPSLSPVSPLSPTSSEAEFDKTTNPDVHPTEATPSSTFTGI. Residues Ser201, Ser202, and Ser204 each carry the phosphoserine modification. The region spanning 208 to 275 is the GRAM domain; the sequence is EAFTEKFLKI…EEVMSAAMYK (68 aa). Phosphoserine is present on residues Ser294, Ser334, and Ser336. Disordered stretches follow at residues 299 to 406 and 431 to 537; these read CHSK…TNEV and FQGI…ITSA. Position 341 is a phosphothreonine (Thr341). Phosphoserine is present on Ser346. Residues 347-362 show a composition bias toward basic and acidic residues; it reads PIREELVSSDELRQDK. The segment covering 363–391 has biased composition (polar residues); sequence SSGASSESVQTVNQAEVESLTVKSESTGT. Positions 452 to 466 are enriched in basic and acidic residues; the sequence is SFLHENSLHQEESQK. Phosphoserine is present on Ser496. Residues 510-527 show a composition bias toward polar residues; that stretch reads HTMQQTKQQRENIQQVSQ. Residues 551–578 form a mediates oxidative antimutator activity region; the sequence is QRHRLHKFLCLRVGKPMRKTFVSQASAT. In terms of domain architecture, TLDc spans 713 to 874; the sequence is ELLLPDQIEK…IQDIEIWAFE (162 aa).

Belongs to the OXR1 family.

It is found in the mitochondrion. In terms of biological role, may be involved in protection from oxidative damage. This Homo sapiens (Human) protein is Oxidation resistance protein 1 (OXR1).